Here is an 86-residue protein sequence, read N- to C-terminus: MVVIRLARGGSKKRPFYNIVAAPARIRRDGRFLERVGFYNPVAAGGEEPLRVAFDRIDHWVSHGAQLSPTVARLVKDAKAKVAPAA.

Belongs to the bacterial ribosomal protein bS16 family.

The protein is Small ribosomal subunit protein bS16 of Methylibium petroleiphilum (strain ATCC BAA-1232 / LMG 22953 / PM1).